An 889-amino-acid chain; its full sequence is Alanine--tRNA ligase (889 aa).

H564, H568, C677, and H681 together coordinate Zn(2+).

The protein belongs to the class-II aminoacyl-tRNA synthetase family. Requires Zn(2+) as cofactor.

The protein localises to the cytoplasm. The catalysed reaction is tRNA(Ala) + L-alanine + ATP = L-alanyl-tRNA(Ala) + AMP + diphosphate. In terms of biological role, catalyzes the attachment of alanine to tRNA(Ala) in a two-step reaction: alanine is first activated by ATP to form Ala-AMP and then transferred to the acceptor end of tRNA(Ala). Also edits incorrectly charged Ser-tRNA(Ala) and Gly-tRNA(Ala) via its editing domain. The protein is Alanine--tRNA ligase of Rhodopseudomonas palustris (strain ATCC BAA-98 / CGA009).